The following is a 101-amino-acid chain: NAD(P)H-quinone oxidoreductase subunit 4L, chloroplastic (101 aa).

Transmembrane regions (helical) follow at residues 2 to 22, 32 to 52, and 61 to 81; these read MLEH…YGLI, MCLE…SDFF, and IFSI…PAIV.

Belongs to the complex I subunit 4L family. NDH is composed of at least 16 different subunits, 5 of which are encoded in the nucleus.

The protein localises to the plastid. The protein resides in the chloroplast thylakoid membrane. It catalyses the reaction a plastoquinone + NADH + (n+1) H(+)(in) = a plastoquinol + NAD(+) + n H(+)(out). The enzyme catalyses a plastoquinone + NADPH + (n+1) H(+)(in) = a plastoquinol + NADP(+) + n H(+)(out). Its function is as follows. NDH shuttles electrons from NAD(P)H:plastoquinone, via FMN and iron-sulfur (Fe-S) centers, to quinones in the photosynthetic chain and possibly in a chloroplast respiratory chain. The immediate electron acceptor for the enzyme in this species is believed to be plastoquinone. Couples the redox reaction to proton translocation, and thus conserves the redox energy in a proton gradient. The protein is NAD(P)H-quinone oxidoreductase subunit 4L, chloroplastic of Vitis vinifera (Grape).